The chain runs to 259 residues: 3-deoxy-manno-octulosonate cytidylyltransferase 1 (259 aa).

Belongs to the KdsB family.

The protein resides in the cytoplasm. It carries out the reaction 3-deoxy-alpha-D-manno-oct-2-ulosonate + CTP = CMP-3-deoxy-beta-D-manno-octulosonate + diphosphate. The protein operates within nucleotide-sugar biosynthesis; CMP-3-deoxy-D-manno-octulosonate biosynthesis; CMP-3-deoxy-D-manno-octulosonate from 3-deoxy-D-manno-octulosonate and CTP: step 1/1. It functions in the pathway bacterial outer membrane biogenesis; lipopolysaccharide biosynthesis. Activates KDO (a required 8-carbon sugar) for incorporation into bacterial lipopolysaccharide in Gram-negative bacteria. The sequence is that of 3-deoxy-manno-octulosonate cytidylyltransferase 1 from Hydrogenovibrio crunogenus (strain DSM 25203 / XCL-2) (Thiomicrospira crunogena).